The chain runs to 364 residues: Aminomethyltransferase (364 aa).

This sequence belongs to the GcvT family. The glycine cleavage system is composed of four proteins: P, T, L and H.

It catalyses the reaction N(6)-[(R)-S(8)-aminomethyldihydrolipoyl]-L-lysyl-[protein] + (6S)-5,6,7,8-tetrahydrofolate = N(6)-[(R)-dihydrolipoyl]-L-lysyl-[protein] + (6R)-5,10-methylene-5,6,7,8-tetrahydrofolate + NH4(+). Its function is as follows. The glycine cleavage system catalyzes the degradation of glycine. This chain is Aminomethyltransferase, found in Photorhabdus laumondii subsp. laumondii (strain DSM 15139 / CIP 105565 / TT01) (Photorhabdus luminescens subsp. laumondii).